The following is a 303-amino-acid chain: Holdfast attachment protein D (303 aa).

Residues 266 to 281 (SARSTMSGPKSCSTTF) show a composition bias toward polar residues. The tract at residues 266 to 303 (SARSTMSGPKSCSTTFRPIRAAASRRPPASAGTRAMTR) is disordered. Residues 282–303 (RPIRAAASRRPPASAGTRAMTR) show a composition bias toward low complexity.

The protein localises to the cell outer membrane. In terms of biological role, involved in attachment of the holdfast to the cell. The holdfast is a structure that allows the bacteria to firmly adhere to surfaces. This Caulobacter vibrioides (strain ATCC 19089 / CIP 103742 / CB 15) (Caulobacter crescentus) protein is Holdfast attachment protein D (hfaD).